The following is a 255-amino-acid chain: ATP synthase subunit a 2 (255 aa).

The next 5 helical transmembrane spans lie at 26–46 (SINI…IGVF), 86–106 (LIGP…SIDL), 131–151 (DVNV…GYTL), 205–225 (MIFI…SVPW), and 230–250 (ILIV…YLAM).

This sequence belongs to the ATPase A chain family. F-type ATPases have 2 components, CF(1) - the catalytic core - and CF(0) - the membrane proton channel. CF(1) has five subunits: alpha(3), beta(3), gamma(1), delta(1), epsilon(1). CF(0) has three main subunits: a(1), b(2) and c(9-12). The alpha and beta chains form an alternating ring which encloses part of the gamma chain. CF(1) is attached to CF(0) by a central stalk formed by the gamma and epsilon chains, while a peripheral stalk is formed by the delta and b chains.

It is found in the cell inner membrane. In terms of biological role, key component of the proton channel; it plays a direct role in the translocation of protons across the membrane. This is ATP synthase subunit a 2 from Photobacterium profundum (strain SS9).